The sequence spans 213 residues: Pyridoxine/pyridoxamine 5'-phosphate oxidase (213 aa).

Substrate contacts are provided by residues 8-11 (RREY) and Lys67. FMN contacts are provided by residues 62-67 (RIVLLK), 77-78 (FT), Arg83, Lys84, and Gln106. Residues Tyr124, Arg128, and Ser132 each coordinate substrate. FMN is bound by residues 141–142 (QS) and Trp186. Residue 192–194 (RLH) participates in substrate binding. Arg196 provides a ligand contact to FMN.

It belongs to the pyridoxamine 5'-phosphate oxidase family. As to quaternary structure, homodimer. It depends on FMN as a cofactor.

It carries out the reaction pyridoxamine 5'-phosphate + O2 + H2O = pyridoxal 5'-phosphate + H2O2 + NH4(+). The enzyme catalyses pyridoxine 5'-phosphate + O2 = pyridoxal 5'-phosphate + H2O2. It participates in cofactor metabolism; pyridoxal 5'-phosphate salvage; pyridoxal 5'-phosphate from pyridoxamine 5'-phosphate: step 1/1. The protein operates within cofactor metabolism; pyridoxal 5'-phosphate salvage; pyridoxal 5'-phosphate from pyridoxine 5'-phosphate: step 1/1. Its function is as follows. Catalyzes the oxidation of either pyridoxine 5'-phosphate (PNP) or pyridoxamine 5'-phosphate (PMP) into pyridoxal 5'-phosphate (PLP). The chain is Pyridoxine/pyridoxamine 5'-phosphate oxidase from Shewanella sediminis (strain HAW-EB3).